The following is a 271-amino-acid chain: Malonyl-[acyl-carrier protein] O-methyltransferase (271 aa).

Belongs to the methyltransferase superfamily.

It catalyses the reaction malonyl-[ACP] + S-adenosyl-L-methionine = malonyl-[ACP] methyl ester + S-adenosyl-L-homocysteine. The protein operates within cofactor biosynthesis; biotin biosynthesis. Its function is as follows. Converts the free carboxyl group of a malonyl-thioester to its methyl ester by transfer of a methyl group from S-adenosyl-L-methionine (SAM). It allows to synthesize pimeloyl-ACP via the fatty acid synthetic pathway. The sequence is that of Malonyl-[acyl-carrier protein] O-methyltransferase from Halalkalibacterium halodurans (strain ATCC BAA-125 / DSM 18197 / FERM 7344 / JCM 9153 / C-125) (Bacillus halodurans).